The chain runs to 193 residues: Acyl-homoserine-lactone synthase (193 aa).

It belongs to the autoinducer synthase family.

The enzyme catalyses a fatty acyl-[ACP] + S-adenosyl-L-methionine = an N-acyl-L-homoserine lactone + S-methyl-5'-thioadenosine + holo-[ACP] + H(+). In terms of biological role, required for the synthesis of OHHL (N-(3-oxohexanoyl)-L-homoserine lactone) also known as VAI or N-(beta-ketocaproyl)homoserine lactone or 3-oxo-N-(tetrahydro-2-oxo-3-furanyl)-hexanamide, an autoinducer molecule which binds to LuxR and thus acts in bioluminescence regulation. In Aliivibrio fischeri (Vibrio fischeri), this protein is Acyl-homoserine-lactone synthase (luxI).